A 459-amino-acid chain; its full sequence is Transcription factor AP-2-beta (459 aa).

A Glycyl lysine isopeptide (Lys-Gly) (interchain with G-Cter in SUMO) cross-link involves residue lysine 21. Residues 30–139 (HDGVPSHSSR…PQLSGLDPRR (110 aa)) form a disordered region. A compositionally biased stretch (polar residues) spans 35 to 51 (SHSSRLSQLGSVSQGPY). Residues 121–132 (LLPQPRAALPQL) are compositionally biased toward low complexity. Serine 258 is modified (phosphoserine; by PKA). An H-S-H (helix-span-helix), dimerization region spans residues 299 to 429 (RRKAANVTLL…YLTEALKGMD (131 aa)). The interval 435–459 (NTTNRHTSGEGPGSKTGDKEEKHRK) is disordered. The span at 450-459 (TGDKEEKHRK) shows a compositional bias: basic and acidic residues.

Belongs to the AP-2 family. In terms of assembly, binds DNA as a dimer. Can form homodimers or heterodimers with other AP-2 family members. Interacts with CITED4. Interacts with UBE2I. Interacts with KCTD1; this interaction represses transcription activation. Interacts with CITED2 (via C-terminus); the interaction stimulates TFAP2B-transcriptional activity. Post-translationally, sumoylated. Sumoylated on Lys-21; which inhibits transcriptional activity. As to expression, localizes to neurons in areas of the cerebral cortex, cerebellum and hypothalamus (at protein level).

Its subcellular location is the nucleus. Functionally, sequence-specific DNA-binding protein that interacts with inducible viral and cellular enhancer elements to regulate transcription of selected genes. AP-2 factors bind to the consensus sequence 5'-GCCNNNGGC-3' and activate genes involved in a large spectrum of important biological functions including proper eye, face, body wall, limb and neural tube development. They also suppress a number of genes including MCAM/MUC18, C/EBP alpha and MYC. AP-2-beta appears to be required for normal face and limb development and for proper terminal differentiation and function of renal tubular epithelia. The sequence is that of Transcription factor AP-2-beta (Tfap2b) from Mus musculus (Mouse).